The sequence spans 232 residues: Pyridoxine 5'-phosphate synthase (232 aa).

Asn-7 contributes to the 3-amino-2-oxopropyl phosphate binding site. Residue 9 to 10 participates in 1-deoxy-D-xylulose 5-phosphate binding; that stretch reads DH. A 3-amino-2-oxopropyl phosphate-binding site is contributed by Arg-18. The Proton acceptor role is filled by His-43. 1-deoxy-D-xylulose 5-phosphate-binding residues include Arg-45 and His-50. Glu-69 (proton acceptor) is an active-site residue. Thr-99 is a binding site for 1-deoxy-D-xylulose 5-phosphate. Catalysis depends on His-185, which acts as the Proton donor. 3-amino-2-oxopropyl phosphate-binding positions include Gly-186 and 207–208; that span reads GH.

It belongs to the PNP synthase family. Homooctamer; tetramer of dimers.

The protein resides in the cytoplasm. It carries out the reaction 3-amino-2-oxopropyl phosphate + 1-deoxy-D-xylulose 5-phosphate = pyridoxine 5'-phosphate + phosphate + 2 H2O + H(+). It participates in cofactor biosynthesis; pyridoxine 5'-phosphate biosynthesis; pyridoxine 5'-phosphate from D-erythrose 4-phosphate: step 5/5. Functionally, catalyzes the complicated ring closure reaction between the two acyclic compounds 1-deoxy-D-xylulose-5-phosphate (DXP) and 3-amino-2-oxopropyl phosphate (1-amino-acetone-3-phosphate or AAP) to form pyridoxine 5'-phosphate (PNP) and inorganic phosphate. This chain is Pyridoxine 5'-phosphate synthase, found in Gluconobacter oxydans (strain 621H) (Gluconobacter suboxydans).